The primary structure comprises 418 residues: Transcription termination factor Rho (418 aa).

Residues 48-123 (DIYGDGVLEI…LKVNDINFDR (76 aa)) form the Rho RNA-BD domain. ATP is bound by residues 169–174 (GKGQRG), 181–186 (KAGKTM), and Arg212.

Belongs to the Rho family. As to quaternary structure, homohexamer. The homohexamer assembles into an open ring structure.

Functionally, facilitates transcription termination by a mechanism that involves Rho binding to the nascent RNA, activation of Rho's RNA-dependent ATPase activity, and release of the mRNA from the DNA template. The chain is Transcription termination factor Rho from Allochromatium vinosum (strain ATCC 17899 / DSM 180 / NBRC 103801 / NCIMB 10441 / D) (Chromatium vinosum).